Consider the following 194-residue polypeptide: MEKKKNLEQDCIFRIVIIGYDYECGIKSLLKKFTLGEFSPFPESQVGVDFDIKTINVDNQDIKLQIWPQNKYFNDTSDKRDFLYKGAHGYLLVYGCHSQKSFDNLLNDWMVQIDKFSNEFSKRNLVLVCNNSETPETYMTKPNYLVDSNITKQWANSKNIPFFEINPKENFNVDEPFIQLARLIKNQNFINSTK.

19–27 (GYDYECGIK) is a binding site for GTP. Residues 42 to 50 (PESQVGVDF) carry the Effector region motif. Residues 68–72 (PQNKY) and 130–133 (NNSE) contribute to the GTP site.

Belongs to the small GTPase superfamily. Rab family.

The chain is Ras-related protein RabU (rabU) from Dictyostelium discoideum (Social amoeba).